Reading from the N-terminus, the 90-residue chain is DNA-directed RNA polymerase subunit omega (90 aa).

Residues 69-90 (RQEQQEQEAAELAAVSSIAHTR) form a disordered region.

It belongs to the RNA polymerase subunit omega family. As to quaternary structure, the RNAP catalytic core consists of 2 alpha, 1 beta, 1 beta' and 1 omega subunit. When a sigma factor is associated with the core the holoenzyme is formed, which can initiate transcription.

It catalyses the reaction RNA(n) + a ribonucleoside 5'-triphosphate = RNA(n+1) + diphosphate. In terms of biological role, promotes RNA polymerase assembly. Latches the N- and C-terminal regions of the beta' subunit thereby facilitating its interaction with the beta and alpha subunits. The sequence is that of DNA-directed RNA polymerase subunit omega from Vibrio atlanticus (strain LGP32) (Vibrio splendidus (strain Mel32)).